The chain runs to 304 residues: Non-specific ribonucleoside hydrolase RihC (304 aa).

Residue His-233 is part of the active site.

This sequence belongs to the IUNH family. RihC subfamily.

Hydrolyzes both purine and pyrimidine ribonucleosides with a broad-substrate specificity. This is Non-specific ribonucleoside hydrolase RihC from Escherichia coli O7:K1 (strain IAI39 / ExPEC).